The primary structure comprises 463 residues: Ammonium transporter 1 (463 aa).

The Extracellular portion of the chain corresponds to 1–39 (MVAGEIIKGVAAEITNGSSSSVVQKYLDCANQVAPDPGN). A helical membrane pass occupies residues 40–60 (TTWVLLSTILVLGMMPALAFF). Residues 61 to 76 (EAGLLRSKNTLSIITQ) lie on the Cytoplasmic side of the membrane. A helical transmembrane segment spans residues 77–97 (IMSGIVVLTVMWQAFGYSLTF). The Extracellular portion of the chain corresponds to 98–127 (GPDQKGIIGNLDHAFLINVSYDDCSPNAPN). A helical transmembrane segment spans residues 128–148 (IPAAAYAFFMMMFANITPLLM). The Cytoplasmic portion of the chain corresponds to 149 to 160 (TGAFAERVKFKA). Residues 161–181 (FIALTVAWEIIVFYPVAHWIW) form a helical membrane-spanning segment. The Extracellular portion of the chain corresponds to 182–194 (GGGWLHKYFGVLD). A helical transmembrane segment spans residues 195–215 (FAGGIVIHTSAGVSALVIALY). The Cytoplasmic segment spans residues 216 to 233 (VGRRKDFEKYGGEFPPSN). A helical transmembrane segment spans residues 234-254 (LPLATIGAALLWMGWFGFNAG). Residues 255–265 (SALAAGNIATS) lie on the Extracellular side of the membrane. Residues 266-286 (AVASTQIGGSFSAIVWIILSA) form a helical membrane-spanning segment. The Cytoplasmic portion of the chain corresponds to 287–293 (AKGKPNT). A helical membrane pass occupies residues 294-314 (VSVINGVIAGLAGITPASGYI). Over 315–316 (NS) the chain is Extracellular. A helical transmembrane segment spans residues 317–337 (QYSIGLGICLGLASYYSVVLL). Residues 338–351 (KHKLHIDDALDVSS) are Cytoplasmic-facing. The helical transmembrane segment at 352–372 (VHGLTGIIGSLAIGFCAELSV) threads the bilayer. At 373-392 (NPNGANGAFYGNPKLIGTQL) the chain is on the extracellular side. Residues 393–413 (LGVVSVAVWAAAWTWVLLKII) form a helical membrane-spanning segment. Topologically, residues 414–463 (DATIGVKIDESEEELGLDLVEHGEFAYHNISLQGNENHYSSVINSHDFFK) are cytoplasmic.

Belongs to the ammonia transporter channel (TC 1.A.11.2) family.

The protein localises to the cell membrane. The protein resides in the endosome membrane. It localises to the lysosome membrane. Its subcellular location is the cytoplasmic vesicle. It is found in the phagosome membrane. In terms of biological role, ammonium transporter that mediates the excretion of ammonium. Controls ammonium homeostasis during growth and development. Ammonium has been shown to function as a morphogen at multiple steps during the development. This Dictyostelium discoideum (Social amoeba) protein is Ammonium transporter 1 (amtA).